A 412-amino-acid chain; its full sequence is Multifunctional CCA protein (412 aa).

Positions 8 and 11 each coordinate ATP. CTP is bound by residues Gly8 and Arg11. Mg(2+) contacts are provided by Asp21 and Asp23. 3 residues coordinate ATP: Arg91, Arg137, and Arg140. CTP contacts are provided by Arg91, Arg137, and Arg140. An HD domain is found at 228–329 (TGIHTLMTLS…VKLFDSIDAW (102 aa)).

The protein belongs to the tRNA nucleotidyltransferase/poly(A) polymerase family. Bacterial CCA-adding enzyme type 1 subfamily. In terms of assembly, monomer. Can also form homodimers and oligomers. Mg(2+) is required as a cofactor. Requires Ni(2+) as cofactor.

The enzyme catalyses a tRNA precursor + 2 CTP + ATP = a tRNA with a 3' CCA end + 3 diphosphate. The catalysed reaction is a tRNA with a 3' CCA end + 2 CTP + ATP = a tRNA with a 3' CCACCA end + 3 diphosphate. Catalyzes the addition and repair of the essential 3'-terminal CCA sequence in tRNAs without using a nucleic acid template. Adds these three nucleotides in the order of C, C, and A to the tRNA nucleotide-73, using CTP and ATP as substrates and producing inorganic pyrophosphate. tRNA 3'-terminal CCA addition is required both for tRNA processing and repair. Also involved in tRNA surveillance by mediating tandem CCA addition to generate a CCACCA at the 3' terminus of unstable tRNAs. While stable tRNAs receive only 3'-terminal CCA, unstable tRNAs are marked with CCACCA and rapidly degraded. In Escherichia coli O127:H6 (strain E2348/69 / EPEC), this protein is Multifunctional CCA protein.